A 102-amino-acid chain; its full sequence is Putative peripheral benzodiazepine receptor-related protein (102 aa).

As to expression, ubiquitous.

The sequence is that of Putative peripheral benzodiazepine receptor-related protein (TSPO) from Homo sapiens (Human).